The sequence spans 221 residues: LHFPL tetraspan subfamily member 5 protein (221 aa).

Over Met-1–Ala-24 the chain is Cytoplasmic. A helical membrane pass occupies residues Met-25–Ile-45. Residues Gln-46 to Met-98 are Extracellular-facing. The helical transmembrane segment at Phe-99–Phe-119 threads the bilayer. The Cytoplasmic portion of the chain corresponds to Phe-120 to Lys-128. Residues Val-129–Pro-149 form a helical membrane-spanning segment. Residues Asp-150–Tyr-179 lie on the Extracellular side of the membrane. The helical transmembrane segment at Ile-180 to Gly-200 threads the bilayer. Over Asn-201 to Glu-221 the chain is Cytoplasmic.

The protein belongs to the LHFP family.

The protein resides in the cell membrane. Its function is as follows. Probable component of the mechanotransducer (MET) non-specific cation channel complex. The protein is LHFPL tetraspan subfamily member 5 protein of Gallus gallus (Chicken).